Consider the following 103-residue polypeptide: Large ribosomal subunit protein bL21 (103 aa).

The protein belongs to the bacterial ribosomal protein bL21 family. As to quaternary structure, part of the 50S ribosomal subunit. Contacts protein L20.

Functionally, this protein binds to 23S rRNA in the presence of protein L20. In Pseudomonas aeruginosa (strain LESB58), this protein is Large ribosomal subunit protein bL21.